Reading from the N-terminus, the 430-residue chain is UPF0597 protein Clos_2050 (430 aa).

The protein belongs to the UPF0597 family.

This chain is UPF0597 protein Clos_2050, found in Alkaliphilus oremlandii (strain OhILAs) (Clostridium oremlandii (strain OhILAs)).